A 334-amino-acid chain; its full sequence is Serine/threonine-protein kinase SAPK3 (334 aa).

In terms of domain architecture, Protein kinase spans 5 to 261 (YEALKELGAG…IPEIKKHTWF (257 aa)). ATP contacts are provided by residues 11 to 19 (LGAGNFGVA) and Lys-34. The active-site Proton acceptor is the Asp-124.

This sequence belongs to the protein kinase superfamily. Ser/Thr protein kinase family. In terms of processing, autophosphorylated in presence of Ca(2+). In terms of tissue distribution, expressed in leaves and maturing seeds, but not in roots and stems of field-grown plants.

It localises to the cytoplasm. The protein localises to the nucleus. It carries out the reaction L-seryl-[protein] + ATP = O-phospho-L-seryl-[protein] + ADP + H(+). The enzyme catalyses L-threonyl-[protein] + ATP = O-phospho-L-threonyl-[protein] + ADP + H(+). With respect to regulation, activated by phosphorylation. Functionally, may play a role in signal transduction of hyperosmotic response. This chain is Serine/threonine-protein kinase SAPK3 (SAPK3), found in Oryza sativa subsp. indica (Rice).